Here is a 240-residue protein sequence, read N- to C-terminus: 2,3,4,5-tetrahydropyridine-2,6-dicarboxylate N-acetyltransferase (240 aa).

This sequence belongs to the transferase hexapeptide repeat family. DapH subfamily.

It catalyses the reaction (S)-2,3,4,5-tetrahydrodipicolinate + acetyl-CoA + H2O = L-2-acetamido-6-oxoheptanedioate + CoA. It functions in the pathway amino-acid biosynthesis; L-lysine biosynthesis via DAP pathway; LL-2,6-diaminopimelate from (S)-tetrahydrodipicolinate (acetylase route): step 1/3. Functionally, catalyzes the transfer of an acetyl group from acetyl-CoA to tetrahydrodipicolinate. The polypeptide is 2,3,4,5-tetrahydropyridine-2,6-dicarboxylate N-acetyltransferase (Staphylococcus epidermidis (strain ATCC 12228 / FDA PCI 1200)).